Reading from the N-terminus, the 214-residue chain is Nigrelysin (214 aa).

A signal peptide spans 1–21 (MKNRLVIIVFMVVTMLCASLA). Positions 22-35 (LPLEEKEDEKDEKR) are excised as a propeptide. Residues 38–47 (EVAGAVMEGA) are plays an important role in the hemolytic activity. The N-terminal region stretch occupies residues 46–65 (GANLGMSVLQTILQAIGDVS). 7 residues coordinate phosphocholine: S89, V122, S140, P142, Y168, Y172, and Y173. Residues 140-155 (SVPYDYNWYSNWWNVK) form a trp-rich region, which is important for the binding to lipid membrane region. Residues 179–181 (KGD) carry the Cell attachment site, crucial for protein stability motif.

This sequence belongs to the actinoporin family. Sea anemone subfamily. Octamer or nonamer in membranes. Monomer in the soluble state.

It localises to the secreted. The protein localises to the nematocyst. It is found in the target cell membrane. Pore-forming protein that forms cation-selective hydrophilic pores in cell membranes and causes cytolysis. Pore formation is a multi-step process that involves specific recognition of membrane sphingomyelin (but neither cholesterol nor phosphatidylcholine) using aromatic rich region and adjacent phosphocholine (POC) binding site, firm binding to the membrane (mainly driven by hydrophobic interactions) accompanied by the transfer of the N-terminal region to the lipid-water interface and finally pore formation after oligomerization of monomers. This protein shows potent hemolytic activity (EC(50)=0.09 nM), as well as potent cytotoxic activity on nucleated cells (L1210 cells). The cytotoxic process starts with cellular swelling that is time and dose dependent and occurs up to a critical volume, probably due to influx of water via pores opened by this actinoporin. The second phase consists of the final loss of membrane integrity that leads to cytolysis. This chain is Nigrelysin, found in Anthopleura nigrescens (Sea anemone).